The primary structure comprises 322 residues: tRNA U34 carboxymethyltransferase (322 aa).

Carboxy-S-adenosyl-L-methionine is bound by residues lysine 90, tryptophan 104, lysine 109, glycine 129, aspartate 151–threonine 153, isoleucine 180–glutamate 181, methionine 195, tyrosine 199, and arginine 314.

Belongs to the class I-like SAM-binding methyltransferase superfamily. CmoB family. In terms of assembly, homotetramer.

It carries out the reaction carboxy-S-adenosyl-L-methionine + 5-hydroxyuridine(34) in tRNA = 5-carboxymethoxyuridine(34) in tRNA + S-adenosyl-L-homocysteine + H(+). In terms of biological role, catalyzes carboxymethyl transfer from carboxy-S-adenosyl-L-methionine (Cx-SAM) to 5-hydroxyuridine (ho5U) to form 5-carboxymethoxyuridine (cmo5U) at position 34 in tRNAs. The polypeptide is tRNA U34 carboxymethyltransferase (Citrobacter koseri (strain ATCC BAA-895 / CDC 4225-83 / SGSC4696)).